A 185-amino-acid chain; its full sequence is Lipid A acyltransferase PagP (185 aa).

Positions 1 to 14 (MKLKPVLYLLMLLG) are cleaved as a signal peptide. Cys15 carries the N-palmitoyl cysteine lipid modification. Cys15 is lipidated: S-diacylglycerol cysteine. Active-site residues include His57, Asp100, and Ser101.

This sequence belongs to the lipid A palmitoyltransferase family. Homodimer.

The protein resides in the cell outer membrane. It carries out the reaction a lipid A + a 1,2-diacyl-sn-glycero-3-phosphocholine = a hepta-acyl lipid A + a 2-acyl-sn-glycero-3-phosphocholine. The enzyme catalyses a lipid IVA + a 1,2-diacyl-sn-glycero-3-phosphocholine = a lipid IVB + a 2-acyl-sn-glycero-3-phosphocholine. It catalyses the reaction a lipid IIA + a 1,2-diacyl-sn-glycero-3-phosphocholine = a lipid IIB + a 2-acyl-sn-glycero-3-phosphocholine. Its function is as follows. Transfers a fatty acid residue from the sn-1 position of a phospholipid to the N-linked hydroxyfatty acid chain on the proximal unit of lipid A or its precursors. The polypeptide is Lipid A acyltransferase PagP (Erwinia sp. (strain Ejp617)).